Reading from the N-terminus, the 1638-residue chain is Chromatin-remodeling ATPase INO80 (1638 aa).

The tract at residues 41-93 is disordered; it reads SLRKPLSSDEETDDEHVVKREHDVQDSDDSSTVGVVRMKQSSKRKSRLLASKE. Ser47 and Ser48 each carry phosphoserine. The residue at position 52 (Thr52) is a Phosphothreonine. Residues 55–65 are compositionally biased toward basic and acidic residues; it reads EHVVKREHDVQ. Ser67 and Ser70 each carry phosphoserine. A coiled-coil region spans residues 136 to 161; that stretch reads VQQLLREHVREQRQRKNYYKKAANAQ. Residues 201–259 form a disordered region; that stretch reads RLAEAQAGPKPPKQRRRGRKKRDNMGSPESGEVPPSELGKYTFGDTLPNNEDDDEDGGE. Basic residues predominate over residues 212–222; sequence PKQRRRGRKKR. Phosphoserine occurs at positions 227 and 230. The segment covering 250 to 259 has biased composition (acidic residues); that stretch reads NEDDDEDGGE. The region spanning 313–438 is the DBINO domain; that stretch reads IWQIMSKKES…AHFMSKKLGQ (126 aa). Residues 499-528 form a disordered region; sequence KEKEEEEQAQESVEDIKPEPRPEMKDLPQP. The span at 502-511 shows a compositional bias: acidic residues; it reads EEEEQAQESV. Residues 512–526 are compositionally biased toward basic and acidic residues; the sequence is EDIKPEPRPEMKDLP. One can recognise a Helicase ATP-binding domain in the interval 547-718; that stretch reads ANIYDQGISG…WALLHFIMPT (172 aa). 560-567 is an ATP binding site; the sequence is DEMGLGKT. The Helicase C-terminal domain occupies 1160 to 1315; sequence VLDNLLTRLK…GGNFKPDTLK (156 aa). 2 disordered regions span residues 1335–1364 and 1463–1638; these read QEAK…DVNM and FLDD…VGPE. Residues 1338 to 1350 are compositionally biased toward polar residues; it reads KLQSSSPIPAATQ. Basic residues predominate over residues 1473–1495; sequence MRRRHHPRGTRRGRPRGSTRRGG. 2 stretches are compositionally biased toward low complexity: residues 1505–1534 and 1618–1627; these read TPTQ…GTSS and SPATSRAPSP.

The protein belongs to the SNF2/RAD54 helicase family. Component of the chromatin remodeling Ino80 complex.

It is found in the nucleus. The catalysed reaction is ATP + H2O = ADP + phosphate + H(+). Functionally, ATPase component of the chromatin remodeling INO80 complex which is involved in transcriptional regulation, DNA replication and DNA repair. Binds DNA. As part of the INO80 complex, remodels chromatin by shifting nucleosomes. In Drosophila melanogaster (Fruit fly), this protein is Chromatin-remodeling ATPase INO80.